A 478-amino-acid polypeptide reads, in one-letter code: Isoeugenol monooxygenase (478 aa).

The Fe cation site is built by His-167, His-218, His-282, and His-471.

This sequence belongs to the carotenoid oxygenase family. Fe(2+) serves as cofactor.

The catalysed reaction is (E)-isoeugenol + O2 = vanillin + acetaldehyde. Its activity is regulated as follows. Inhibited by Co(2+), Ni(2+) and Zn(2+), which may inhibit enzyme activity by replacing iron in the catalytic residues. Inhibited by incubation with high concentrations of the iron chelators 1,10-phenanthroline and Tiron. However, iron is not completely removed by the chelators, suggesting that iron is tightly bound to the enzyme. Functionally, involved in isoeugenol degradation. Catalyzes the oxidative cleavage of the side chain double-bond of isoeugenol to form vanillin and acetaldehyde. This is Isoeugenol monooxygenase from Pseudomonas nitroreducens.